The following is a 234-amino-acid chain: Large ribosomal subunit protein uL1 (234 aa).

It belongs to the universal ribosomal protein uL1 family. Part of the 50S ribosomal subunit.

Functionally, binds directly to 23S rRNA. The L1 stalk is quite mobile in the ribosome, and is involved in E site tRNA release. In terms of biological role, protein L1 is also a translational repressor protein, it controls the translation of the L11 operon by binding to its mRNA. Its function is as follows. Peptides originating from the N-terminal end of L1 have antibacterial activity against bacteria such as E.coli and B.megaterium and modest antifungal activities. Has no effect on H.pylori itself. Peptides are not hemolytic against mammalian cells. These peptides may be released in the stomach during altruistic lysis to kill other fast growing bacteria. The chain is Large ribosomal subunit protein uL1 from Helicobacter pylori (strain ATCC 700392 / 26695) (Campylobacter pylori).